The following is a 1719-amino-acid chain: Sodium channel protein type 4 subunit alpha B (1719 aa).

Residues 1-126 (MRTLLPPVGS…IVAIKILIHS (126 aa)) lie on the Cytoplasmic side of the membrane. The interval 28 to 50 (QQIREEERKRTNAQVSEELPEPA) is disordered. Residues 108 to 431 (LLSPFNALRI…VVAMAYAEQN (324 aa)) form an I repeat. Residues 127 to 145 (LFSLFIMATILTNCAFMTL) form a helical membrane-spanning segment. The Extracellular segment spans residues 146–152 (SDPPAWS). A helical membrane pass occupies residues 153 to 173 (KTMEYVFTFIYTFEATIKILS). The Cytoplasmic segment spans residues 174 to 187 (RGFCVGKFTFLKDP). The chain crosses the membrane as a helical span at residues 188–205 (WNWLDFMVISMAYLTELV). Residues 206 to 211 (DLGNVS) lie on the Extracellular side of the membrane. The N-linked (GlcNAc...) asparagine glycan is linked to Asn-209. A helical membrane pass occupies residues 212–228 (VLRTFRVLRALKTITVI). Residues 229-247 (PGLKTIVGALIQSVRKLAD) are Cytoplasmic-facing. A helical transmembrane segment spans residues 248–267 (AMVLTVFCLSVFALIGLQLF). The Extracellular portion of the chain corresponds to 268–368 (MGNLRQKCVL…PNYGYTSYDS (101 aa)). A disulfide bridge connects residues Cys-275 and Cys-337. Asn-285 and Asn-339 each carry an N-linked (GlcNAc...) asparagine glycan. A disulfide bond links Cys-346 and Cys-352. Positions 369–393 (FGWAFLALFRLMTQDFWENLFQLTL) form an intramembrane region, pore-forming. Over 394–400 (RTAGKTY) the chain is Extracellular. The helical transmembrane segment at 401 to 421 (MIFFVVVIFLGSFYLINLILA) threads the bilayer. Topologically, residues 422 to 513 (VVAMAYAEQN…ECLYAIVMDP (92 aa)) are cytoplasmic. The II repeat unit spans residues 495 to 766 (CCGCWRHLKE…QIAINRINRA (272 aa)). Residues 514–532 (FVDLGITICIILNTVFMAM) traverse the membrane as a helical segment. The Extracellular segment spans residues 533 to 543 (EHYPMSADFEE). A helical transmembrane segment spans residues 544 to 563 (LLSVGNLVFTGIFTGEMVFK). Residues 564–577 (ILAMDPYFYFQVGW) are Cytoplasmic-facing. Residues 578–597 (NIFDSIIVTISLVELGLANV) traverse the membrane as a helical segment. Over 598-599 (QG) the chain is Extracellular. A helical membrane pass occupies residues 600–617 (LSVLRSFRLMRVFKLAKS). Residues 618 to 633 (WPTLNMLIKIIGNSVG) are Cytoplasmic-facing. A helical transmembrane segment spans residues 634–652 (ALGNLTLVLAIIVFIFAVV). Topologically, residues 653–681 (GMQLFGKNYKDCVCRISEDCVLPRWHMND) are extracellular. The cysteines at positions 666 and 672 are disulfide-linked. Positions 682–702 (FFHAFLIIFRVLCGEWIESMW) form an intramembrane region, pore-forming. Topologically, residues 703-713 (DCMEVSGQTMC) are extracellular. Cys-704 and Cys-713 are disulfide-bonded. The chain crosses the membrane as a helical span at residues 714-732 (LIVFMMVLVIGNLVVLNLF). At 733-919 (LALLLSSFSG…TCFSIVENNY (187 aa)) the chain is on the cytoplasmic side. Over residues 834 to 845 (SDSDDSDYDEDK) the composition is skewed to acidic residues. Residues 834–862 (SDSDDSDYDEDKDSQCDESSVCSSVQKPE) form a disordered region. Residues 900-1215 (RGKIWCNIRR…KKYYNAMKKL (316 aa)) form an III repeat. The helical transmembrane segment at 920–937 (FESFIVFMILLSSGALAF) threads the bilayer. Over 938–950 (EDIYLEKHQLIKS) the chain is Extracellular. The chain crosses the membrane as a helical span at residues 951-969 (ILEYADKVFTYVFVMEMVL). The Cytoplasmic segment spans residues 970–983 (KWFAYGFKSYFSNA). Residues 984-1002 (WCWLDFLIVDVSLVSLTAN) form a helical membrane-spanning segment. Over 1003 to 1010 (ILGYSELG) the chain is Extracellular. The chain crosses the membrane as a helical span at residues 1011–1029 (AIKSLRTLRALRPLRALSR). Residues 1030 to 1046 (FEGMRVVVNALVGAVPS) lie on the Cytoplasmic side of the membrane. Residues 1047-1066 (IFNVLLVCLIFWLIFSIMGV) form a helical membrane-spanning segment. Topologically, residues 1067 to 1119 (NLFAGKFSYCFNETSQEIIDTKVVDNKTECIALIKANFTEVRWKNVKVNYDNV) are extracellular. Residues Cys-1076 and Cys-1096 are joined by a disulfide bond. 2 N-linked (GlcNAc...) asparagine glycosylation sites follow: Asn-1078 and Asn-1092. An intramembrane region (pore-forming) is located at residues 1120–1141 (GIGYLSLLQVATFKGWTDIMYA). The Extracellular portion of the chain corresponds to 1142-1158 (AVDSRDVESQPIYEVNL). Residues 1159-1180 (YMYLYFVIFIIFGSFFTLNLFI) form a helical membrane-spanning segment. Over 1181–1243 (GVIIDNFNQQ…LVFDLVTKQI (63 aa)) the chain is Cytoplasmic. Residues 1199–1201 (IFM) form an important for rapid channel inactivation region. Residues 1224-1521 (VPRPENPFQG…WEKFDPDASQ (298 aa)) form an IV repeat. A helical membrane pass occupies residues 1244–1261 (FDVFIMVLICLNMVTMMV). The Extracellular portion of the chain corresponds to 1262–1272 (ETDEQSDKKEE). A helical transmembrane segment spans residues 1273 to 1291 (VLYWINVVFILIFTTECTL). The Cytoplasmic segment spans residues 1292-1303 (KIIALRRHYFSI). A helical transmembrane segment spans residues 1304 to 1321 (GWNIFDFVVVILSILGLL). Residues 1322–1334 (LADIIEKYFVSPT) are Extracellular-facing. Residues 1335–1351 (LFRVIRLARIGRVLRLI) form a helical membrane-spanning segment. Residues 1352 to 1370 (RGAKGIRTLLFALMMSLPA) are Cytoplasmic-facing. A helical membrane pass occupies residues 1371–1388 (LFNIGLLLFLIMFIFSIF). Topologically, residues 1389-1410 (GMSNFAYVKKEALIDDMFNFET) are extracellular. Residues 1411–1433 (FGNSMICLFMITTSAGWDGLLSP) constitute an intramembrane region (pore-forming). Over 1434–1462 (IMNTPPDCDPNVENPGTTVRGNCGSPAIG) the chain is Extracellular. Cys-1441 and Cys-1456 are disulfide-bonded. A helical transmembrane segment spans residues 1463-1485 (IAFFSTYIIMSFLVVVNMFIAII). Residues 1486-1719 (LENFNVATEE…QERDQRETSV (234 aa)) are Cytoplasmic-facing. The 30-residue stretch at 1615–1644 (EEVAATVIQRAYRKYLLLRTVRLASFMYRE) folds into the IQ domain.

Belongs to the sodium channel (TC 1.A.1.10) family. Nav1.4/SCN4A subfamily. Voltage-gated sodium (Nav) channels consist of an ion-conducting alpha subunit which is functional on its own associated with regulatory beta subunits.

It localises to the cell membrane. The catalysed reaction is Na(+)(in) = Na(+)(out). Its function is as follows. Pore-forming subunit of a voltage-gated sodium (Nav) channel that directly mediates the depolarizing phase of action potentials in excitable membranes. Navs, also called VGSCs (voltage-gated sodium channels) or VDSCs (voltage-dependent sodium channels), operate by switching between closed and open conformations depending on the voltage difference across the membrane. In the open conformation they allow Na(+) ions to selectively pass through the pore, along their electrochemical gradient. The influx of Na+ ions provokes membrane depolarization, initiating the propagation of electrical signals throughout cells and tissues. The sequence is that of Sodium channel protein type 4 subunit alpha B (scn4ab) from Takifugu rubripes (Japanese pufferfish).